The sequence spans 170 residues: Acireductone dioxygenase (170 aa).

Fe(2+) contacts are provided by histidine 99, histidine 101, glutamate 105, and histidine 144. Ni(2+)-binding residues include histidine 99, histidine 101, glutamate 105, and histidine 144.

It belongs to the acireductone dioxygenase (ARD) family. Monomer. Requires Fe(2+) as cofactor. The cofactor is Ni(2+).

It catalyses the reaction 1,2-dihydroxy-5-(methylsulfanyl)pent-1-en-3-one + O2 = 3-(methylsulfanyl)propanoate + CO + formate + 2 H(+). The enzyme catalyses 1,2-dihydroxy-5-(methylsulfanyl)pent-1-en-3-one + O2 = 4-methylsulfanyl-2-oxobutanoate + formate + 2 H(+). Its pathway is amino-acid biosynthesis; L-methionine biosynthesis via salvage pathway; L-methionine from S-methyl-5-thio-alpha-D-ribose 1-phosphate: step 5/6. Catalyzes 2 different reactions between oxygen and the acireductone 1,2-dihydroxy-3-keto-5-methylthiopentene (DHK-MTPene) depending upon the metal bound in the active site. Fe-containing acireductone dioxygenase (Fe-ARD) produces formate and 2-keto-4-methylthiobutyrate (KMTB), the alpha-ketoacid precursor of methionine in the methionine recycle pathway. Ni-containing acireductone dioxygenase (Ni-ARD) produces methylthiopropionate, carbon monoxide and formate, and does not lie on the methionine recycle pathway. In Bacillus cereus (strain ZK / E33L), this protein is Acireductone dioxygenase.